The primary structure comprises 552 residues: Glycosyltransferase family 92 protein RCOM_0530710 (552 aa).

A helical; Signal-anchor membrane pass occupies residues 12 to 34 (WNRFFWCTLLLVLSCVLFTASTF). The region spanning 277 to 520 (KPHEMCICTM…GTRAVEPPDW (244 aa)) is the GT92 domain.

The protein belongs to the glycosyltransferase 92 family.

It is found in the membrane. This Ricinus communis (Castor bean) protein is Glycosyltransferase family 92 protein RCOM_0530710.